A 934-amino-acid chain; its full sequence is Protein translocase subunit SecA (934 aa).

Residues glutamine 87, 105–109, and aspartate 515 contribute to the ATP site; that span reads GEGKT. The Zn(2+) site is built by cysteine 918, cysteine 920, cysteine 929, and histidine 930.

Belongs to the SecA family. Monomer and homodimer. Part of the essential Sec protein translocation apparatus which comprises SecA, SecYEG and auxiliary proteins SecDF-YajC and YidC. Zn(2+) is required as a cofactor.

It is found in the cell inner membrane. The protein resides in the cytoplasm. It catalyses the reaction ATP + H2O + cellular proteinSide 1 = ADP + phosphate + cellular proteinSide 2.. Its function is as follows. Part of the Sec protein translocase complex. Interacts with the SecYEG preprotein conducting channel. Has a central role in coupling the hydrolysis of ATP to the transfer of proteins into and across the cell membrane, serving both as a receptor for the preprotein-SecB complex and as an ATP-driven molecular motor driving the stepwise translocation of polypeptide chains across the membrane. The sequence is that of Protein translocase subunit SecA from Ralstonia pickettii (strain 12J).